Reading from the N-terminus, the 35-residue chain is Photosystem II reaction center protein T (35 aa).

The chain crosses the membrane as a helical span at residues alanine 3 to phenylalanine 23.

This sequence belongs to the PsbT family. PSII is composed of 1 copy each of membrane proteins PsbA, PsbB, PsbC, PsbD, PsbE, PsbF, PsbH, PsbI, PsbJ, PsbK, PsbL, PsbM, PsbT, PsbY, PsbZ, Psb30/Ycf12, at least 3 peripheral proteins of the oxygen-evolving complex and a large number of cofactors. It forms dimeric complexes.

It localises to the plastid. The protein resides in the chloroplast thylakoid membrane. Found at the monomer-monomer interface of the photosystem II (PS II) dimer, plays a role in assembly and dimerization of PSII. PSII is a light-driven water plastoquinone oxidoreductase, using light energy to abstract electrons from H(2)O, generating a proton gradient subsequently used for ATP formation. This Gossypium barbadense (Sea Island cotton) protein is Photosystem II reaction center protein T.